Reading from the N-terminus, the 182-residue chain is Adenylate kinase (182 aa).

Residue 12-17 (GAGKGT) participates in ATP binding. The interval 32–61 (STGELLRKEIEMNTNLGIQVKDIMNRGELV) is NMP. AMP contacts are provided by residues threonine 33, arginine 38, 59–61 (ELV), 85–88 (GYPR), and glutamine 92. The segment at 126–132 (LRGRKDD) is LID. Arginine 127 lines the ATP pocket. Positions 129 and 140 each coordinate AMP. ATP is bound at residue arginine 168.

The protein belongs to the adenylate kinase family. In terms of assembly, monomer.

It localises to the cytoplasm. The catalysed reaction is AMP + ATP = 2 ADP. It participates in purine metabolism; AMP biosynthesis via salvage pathway; AMP from ADP: step 1/1. Its function is as follows. Catalyzes the reversible transfer of the terminal phosphate group between ATP and AMP. Plays an important role in cellular energy homeostasis and in adenine nucleotide metabolism. The polypeptide is Adenylate kinase (Prochlorococcus marinus (strain AS9601)).